A 426-amino-acid chain; its full sequence is Histidine--tRNA ligase (426 aa).

The protein belongs to the class-II aminoacyl-tRNA synthetase family. In terms of assembly, homodimer.

The protein localises to the cytoplasm. It carries out the reaction tRNA(His) + L-histidine + ATP = L-histidyl-tRNA(His) + AMP + diphosphate + H(+). The polypeptide is Histidine--tRNA ligase (Streptococcus sanguinis (strain SK36)).